Reading from the N-terminus, the 779-residue chain is Vezatin (779 aa).

The next 2 helical transmembrane spans lie at L139–M159 and T162–I182. Residues V430–E462 adopt a coiled-coil conformation. Disordered stretches follow at residues P618 to Q719 and E757 to K779. A compositionally biased stretch (polar residues) spans I625–S634. A compositionally biased stretch (basic and acidic residues) spans K638–N649. A compositionally biased stretch (polar residues) spans G706–Q719. The segment covering E770–K779 has biased composition (basic and acidic residues).

Belongs to the vezatin family. In terms of assembly, interacts with USH2A (via the cytoplasmic region); the interaction associates VEZT with the USH2 complex at the stereocilia base. Interacts with myosin MYO7A and the cadherin-catenins complex.

It is found in the cell membrane. It localises to the cell projection. Its subcellular location is the stereocilium membrane. The protein resides in the cell junction. The protein localises to the adherens junction. It is found in the nucleus. It localises to the cytoplasmic vesicle. Its subcellular location is the secretory vesicle. The protein resides in the acrosome. Its function is as follows. Plays a pivotal role in the establishment of adherens junctions and their maintenance in adult life. Required for morphogenesis of the preimplantation embryo, and for the implantation process. In terms of biological role, (Microbial infection) In case of Listeria infection, promotes bacterial internalization by participating in myosin VIIa recruitment to the entry site. The sequence is that of Vezatin (VEZT) from Homo sapiens (Human).